A 204-amino-acid chain; its full sequence is ADP-ribosylation factor-like protein 15 (204 aa).

GTP contacts are provided by residues glycine 39–threonine 46, glutamate 82–alanine 86, and asparagine 142–aspartate 145.

It belongs to the small GTPase superfamily. Arf family.

This is ADP-ribosylation factor-like protein 15 (Arl15) from Mus musculus (Mouse).